Consider the following 508-residue polypeptide: MAKKALISVSKKEGIVEFAKKLNELGYEIISTGGTYNLLKENRVNVVKVSDITGFPEIMDGRVKTLHPKIHGGLLAIRDNEEHIKALKEHGIEPIDIVVINLYPFKETILKENVTLEEAIENIDIGGPSMIRAAAKNYKYVTILVDPKDYDTVIEEIKQYGNTKEETRFYLAAKAFGHTALYDSLIYNYLIQKNNIEFPEVMAFAYEKAQDMRYGENPHQKAAFYKNPIKAYGIAECEQLHGKELSFNNINDANAAIELLREFKEPAAVAVKHTNPCGVAIADNIYNAYLKAYESDPVSIFGGIVALNRTVDVKTAEELIKIFLEIVIAPDFEEEAFEILKKKKNLRILRLKEGYEKEYDLKKVEGGLLVQEKDEIDLDENNLKVVTKKAPTQKEMEDLRFAWKVVKHVKSNAIVLAKDGATVGIGVGQVNRIWPTEQAIKQAGSKAKGSVLASDAFFPFPDVVEAAVKGGITAIIQPGGSQNDALSIEAADKGGVSMIFTGIRHFKH.

The MGS-like domain occupies 1–145 (MAKKALISVS…KNYKYVTILV (145 aa)).

This sequence belongs to the PurH family.

It catalyses the reaction (6R)-10-formyltetrahydrofolate + 5-amino-1-(5-phospho-beta-D-ribosyl)imidazole-4-carboxamide = 5-formamido-1-(5-phospho-D-ribosyl)imidazole-4-carboxamide + (6S)-5,6,7,8-tetrahydrofolate. It carries out the reaction IMP + H2O = 5-formamido-1-(5-phospho-D-ribosyl)imidazole-4-carboxamide. It participates in purine metabolism; IMP biosynthesis via de novo pathway; 5-formamido-1-(5-phospho-D-ribosyl)imidazole-4-carboxamide from 5-amino-1-(5-phospho-D-ribosyl)imidazole-4-carboxamide (10-formyl THF route): step 1/1. Its pathway is purine metabolism; IMP biosynthesis via de novo pathway; IMP from 5-formamido-1-(5-phospho-D-ribosyl)imidazole-4-carboxamide: step 1/1. This Thermoanaerobacter sp. (strain X514) protein is Bifunctional purine biosynthesis protein PurH.